Here is a 424-residue protein sequence, read N- to C-terminus: Serine/threonine-protein kinase H1 (424 aa).

The N-myristoyl glycine moiety is linked to residue glycine 2. A lipid anchor (S-palmitoyl cysteine) is attached at cysteine 3. Residues 49–81 (KGGFPAASQGANPSPGTPRTSHTEPPSEPPRRA) are disordered. The segment covering 57 to 72 (QGANPSPGTPRTSHTE) has biased composition (polar residues). One can recognise a Protein kinase domain in the interval 98–355 (YDIKALIGRG…ALQALRHPWV (258 aa)). ATP-binding positions include 104 to 112 (IGRGSFSRV) and lysine 127. Aspartate 218 (proton acceptor) is an active-site residue. The disordered stretch occupies residues 378–407 (RASSRCQSTKSAQSTRSSRSTRSNKSRRVR). 2 positions are modified to phosphoserine; by autocatalysis: serine 380 and serine 381. Over residues 385 to 398 (STKSAQSTRSSRST) the composition is skewed to low complexity.

It belongs to the protein kinase superfamily. CAMK Ser/Thr protein kinase family. In terms of assembly, homodimer. Post-translationally, autophosphorylated on serine residues. Myristoylated. Required for membrane association. Prerequisite for palmitoylation to occur. In terms of processing, palmitoylated.

It is found in the golgi apparatus. Its subcellular location is the cytoplasm. The protein resides in the cytoskeleton. It localises to the microtubule organizing center. The protein localises to the centrosome. It is found in the nucleus speckle. Its subcellular location is the endoplasmic reticulum membrane. The protein resides in the cell membrane. It carries out the reaction L-seryl-[protein] + ATP = O-phospho-L-seryl-[protein] + ADP + H(+). The catalysed reaction is L-threonyl-[protein] + ATP = O-phospho-L-threonyl-[protein] + ADP + H(+). With respect to regulation, activity depends on Ca(2+) concentration. Its function is as follows. May be a SFC-associated serine kinase (splicing factor compartment-associated serine kinase) with a role in intranuclear SR protein (non-snRNP splicing factors containing a serine/arginine-rich domain) trafficking and pre-mRNA processing. This chain is Serine/threonine-protein kinase H1 (PSKH1), found in Bos taurus (Bovine).